The following is a 256-amino-acid chain: 3-dehydroquinate dehydratase (256 aa).

Residues serine 19, 38-40 (EIR), and arginine 68 contribute to the 3-dehydroquinate site. The active-site Proton donor/acceptor is the histidine 122. The active-site Schiff-base intermediate with substrate is the lysine 147. The 3-dehydroquinate site is built by arginine 185, threonine 204, and glutamine 208.

It belongs to the type-I 3-dehydroquinase family. As to quaternary structure, homodimer.

The catalysed reaction is 3-dehydroquinate = 3-dehydroshikimate + H2O. Its pathway is metabolic intermediate biosynthesis; chorismate biosynthesis; chorismate from D-erythrose 4-phosphate and phosphoenolpyruvate: step 3/7. Functionally, involved in the third step of the chorismate pathway, which leads to the biosynthesis of aromatic amino acids. Catalyzes the cis-dehydration of 3-dehydroquinate (DHQ) and introduces the first double bond of the aromatic ring to yield 3-dehydroshikimate. This Methanospirillum hungatei JF-1 (strain ATCC 27890 / DSM 864 / NBRC 100397 / JF-1) protein is 3-dehydroquinate dehydratase.